Consider the following 61-residue polypeptide: UPF0434 protein PSPA7_2181 (61 aa).

Belongs to the UPF0434 family.

The sequence is that of UPF0434 protein PSPA7_2181 from Pseudomonas paraeruginosa (strain DSM 24068 / PA7) (Pseudomonas aeruginosa (strain PA7)).